The primary structure comprises 269 residues: Phosphate import ATP-binding protein PstB 2 (269 aa).

The ABC transporter domain maps to 23–264; it reads LEVKDLSIYY…PKKQKTEDYI (242 aa). 55-62 serves as a coordination point for ATP; that stretch reads GPSGCGKS.

It belongs to the ABC transporter superfamily. Phosphate importer (TC 3.A.1.7) family. In terms of assembly, the complex is composed of two ATP-binding proteins (PstB), two transmembrane proteins (PstC and PstA) and a solute-binding protein (PstS).

It localises to the cell membrane. The enzyme catalyses phosphate(out) + ATP + H2O = ADP + 2 phosphate(in) + H(+). Its function is as follows. Part of the ABC transporter complex PstSACB involved in phosphate import. Responsible for energy coupling to the transport system. This is Phosphate import ATP-binding protein PstB 2 from Bacillus subtilis (strain 168).